The primary structure comprises 924 residues: Alpha-actinin, sarcomeric (924 aa).

Residues 1-250 (MMMENGLSME…IMTYVSCYYH (250 aa)) form an actin-binding region. 2 consecutive Calponin-homology (CH) domains span residues 34–138 (KQQK…LRFA) and 147–253 (MTAK…HAFQ). Spectrin repeat units lie at residues 251 to 395 (AFQG…TVSD), 396 to 510 (ISNS…RCQR), 511 to 631 (ICDQ…TAND), and 632 to 744 (MTRK…TMET). EF-hand domains are found at residues 778-813 (EQLN…LGYS) and 819-854 (QGDL…ESTD). Ca(2+) contacts are provided by aspartate 791, asparagine 793, threonine 795, arginine 797, and glutamate 802.

The protein belongs to the alpha-actinin family. In terms of assembly, homodimer; antiparallel. Interacts with Smn; the interaction occurs in adult thoracic tissues. In terms of tissue distribution, larval muscle isoform is expressed in the larval body wall, adult muscles of the head and abdomen and supercontractile muscles of the larva and adult. Adult muscle isoform accumulates within adult fibrillar and tubular muscles.

The protein localises to the cytoplasm. It localises to the myofibril. Its subcellular location is the sarcomere. It is found in the z line. Functionally, F-actin cross-linking protein which is thought to anchor actin to a variety of intracellular structures. This is a bundling protein. This Drosophila melanogaster (Fruit fly) protein is Alpha-actinin, sarcomeric (Actn).